The sequence spans 375 residues: Queuine tRNA-ribosyltransferase (375 aa).

Asp-89 (proton acceptor) is an active-site residue. Substrate contacts are provided by residues 89 to 93 (DSGGF), Asp-143, Gln-187, and Gly-214. Positions 245 to 251 (GVGKPED) are RNA binding. Residue Asp-264 is the Nucleophile of the active site. The interval 269–273 (TRNAR) is RNA binding; important for wobble base 34 recognition. Residues Cys-302, Cys-304, Cys-307, and His-333 each contribute to the Zn(2+) site.

This sequence belongs to the queuine tRNA-ribosyltransferase family. As to quaternary structure, homodimer. Within each dimer, one monomer is responsible for RNA recognition and catalysis, while the other monomer binds to the replacement base PreQ1. Zn(2+) serves as cofactor.

It carries out the reaction 7-aminomethyl-7-carbaguanine + guanosine(34) in tRNA = 7-aminomethyl-7-carbaguanosine(34) in tRNA + guanine. Its pathway is tRNA modification; tRNA-queuosine biosynthesis. In terms of biological role, catalyzes the base-exchange of a guanine (G) residue with the queuine precursor 7-aminomethyl-7-deazaguanine (PreQ1) at position 34 (anticodon wobble position) in tRNAs with GU(N) anticodons (tRNA-Asp, -Asn, -His and -Tyr). Catalysis occurs through a double-displacement mechanism. The nucleophile active site attacks the C1' of nucleotide 34 to detach the guanine base from the RNA, forming a covalent enzyme-RNA intermediate. The proton acceptor active site deprotonates the incoming PreQ1, allowing a nucleophilic attack on the C1' of the ribose to form the product. After dissociation, two additional enzymatic reactions on the tRNA convert PreQ1 to queuine (Q), resulting in the hypermodified nucleoside queuosine (7-(((4,5-cis-dihydroxy-2-cyclopenten-1-yl)amino)methyl)-7-deazaguanosine). The chain is Queuine tRNA-ribosyltransferase from Salmonella choleraesuis (strain SC-B67).